Here is a 330-residue protein sequence, read N- to C-terminus: MKLKVFNVREEEATLAQDWANRNHVELSMSEGPLTLETVNEVEGFDGIANAQIEPLDDAIYPLLKEMGIKQIAQRSAGVDMYNLELAKQHGIIISNVPSYSPESIAEFTVTIALNLIRKVELIRANVREQNFSWTLPIRGRVLGNMTVAIIGTGRIGLATAKIFKGFGCRVIGYDIYHNPMADGILEYVNSVEEAVEEADLVSLHMPPTAENTHLFNLDMFKQFKKGAILMNMARGALVETKDLLEALDQGLLEGAGIDTYEFEGPYIPKNCQGQDISDKDFLRLINHPKVIYTPHAAYYTDEAVKNLVEGALNACVEVIETGTTTTKVN.

NAD(+)-binding positions include 155–156 (RI), Asp-175, 206–207 (MP), Asn-212, 233–235 (MAR), and Asp-259. Arg-235 is an active-site residue. The active site involves Glu-264. The active-site Proton donor is the His-296.

It belongs to the D-isomer specific 2-hydroxyacid dehydrogenase family.

The enzyme catalyses (R)-lactate + NAD(+) = pyruvate + NADH + H(+). In Streptococcus agalactiae serotype V (strain ATCC BAA-611 / 2603 V/R), this protein is D-lactate dehydrogenase (ldhD).